The chain runs to 364 residues: Spermidine/putrescine import ATP-binding protein PotA (364 aa).

The region spanning 6–236 (IEIRQIYKSY…PANLHVAMFI (231 aa)) is the ABC transporter domain. Position 38–45 (38–45 (GPSGCGKT)) interacts with ATP.

This sequence belongs to the ABC transporter superfamily. Spermidine/putrescine importer (TC 3.A.1.11.1) family. The complex is composed of two ATP-binding proteins (PotA), two transmembrane proteins (PotB and PotC) and a solute-binding protein (PotD).

Its subcellular location is the cell inner membrane. The enzyme catalyses ATP + H2O + polyamine-[polyamine-binding protein]Side 1 = ADP + phosphate + polyamineSide 2 + [polyamine-binding protein]Side 1.. In terms of biological role, part of the ABC transporter complex PotABCD involved in spermidine/putrescine import. Responsible for energy coupling to the transport system. The chain is Spermidine/putrescine import ATP-binding protein PotA from Legionella pneumophila (strain Paris).